A 164-amino-acid chain; its full sequence is Protein-export protein SecB (164 aa).

The protein belongs to the SecB family. In terms of assembly, homotetramer, a dimer of dimers. One homotetramer interacts with 1 SecA dimer.

It localises to the cytoplasm. One of the proteins required for the normal export of preproteins out of the cell cytoplasm. It is a molecular chaperone that binds to a subset of precursor proteins, maintaining them in a translocation-competent state. It also specifically binds to its receptor SecA. In Pseudomonas syringae pv. tomato (strain ATCC BAA-871 / DC3000), this protein is Protein-export protein SecB.